Reading from the N-terminus, the 68-residue chain is Ribosome modulation factor (68 aa).

The protein belongs to the ribosome modulation factor family.

Its subcellular location is the cytoplasm. During stationary phase, converts 70S ribosomes to an inactive dimeric form (100S ribosomes). The polypeptide is Ribosome modulation factor (Alcanivorax borkumensis (strain ATCC 700651 / DSM 11573 / NCIMB 13689 / SK2)).